A 358-amino-acid polypeptide reads, in one-letter code: S-adenosylmethionine:tRNA ribosyltransferase-isomerase (358 aa).

This sequence belongs to the QueA family. Monomer.

Its subcellular location is the cytoplasm. The catalysed reaction is 7-aminomethyl-7-carbaguanosine(34) in tRNA + S-adenosyl-L-methionine = epoxyqueuosine(34) in tRNA + adenine + L-methionine + 2 H(+). It functions in the pathway tRNA modification; tRNA-queuosine biosynthesis. Its function is as follows. Transfers and isomerizes the ribose moiety from AdoMet to the 7-aminomethyl group of 7-deazaguanine (preQ1-tRNA) to give epoxyqueuosine (oQ-tRNA). The polypeptide is S-adenosylmethionine:tRNA ribosyltransferase-isomerase (Chelativorans sp. (strain BNC1)).